A 304-amino-acid polypeptide reads, in one-letter code: Probable UDP-3-O-acylglucosamine N-acyltransferase 2, mitochondrial (304 aa).

The N-terminal 47 residues, 1-47 (MAATLWRLYSKSICNSLQGIILNKPFIQKQLLLSSRTRSLSFSSDSQ), are a transit peptide targeting the mitochondrion. 159–161 (FGF) is a UDP-N-acetyl-alpha-D-glucosamine binding site. Hexadecanoate-binding residues include Asp209 and Gln213. His216 functions as the Proton acceptor in the catalytic mechanism. Residues Asn217, Ser235, and His253 each contribute to the UDP-N-acetyl-alpha-D-glucosamine site.

It belongs to the transferase hexapeptide repeat family. LpxD subfamily. As to quaternary structure, homotrimer.

The protein resides in the mitochondrion. It carries out the reaction a UDP-3-O-[(3R)-3-hydroxyacyl]-alpha-D-glucosamine + a (3R)-hydroxyacyl-[ACP] = a UDP-2-N,3-O-bis[(3R)-3-hydroxyacyl]-alpha-D-glucosamine + holo-[ACP] + H(+). It participates in glycolipid biosynthesis; lipid IV(A) biosynthesis; lipid IV(A) from (3R)-3-hydroxytetradecanoyl-[acyl-carrier-protein] and UDP-N-acetyl-alpha-D-glucosamine: step 3/6. Functionally, involved in the biosynthesis of lipid A, a phosphorylated glycolipid that in bacteria anchors the lipopolysaccharide to the outer membrane of the cell. Lipid A-like molecules in plants may serve as structural components of the outer membranes of mitochondria and/or chloroplasts, or may be involved in signal transduction or plant defense responses. This chain is Probable UDP-3-O-acylglucosamine N-acyltransferase 2, mitochondrial (LPXD2), found in Arabidopsis thaliana (Mouse-ear cress).